Here is a 155-residue protein sequence, read N- to C-terminus: uncharacterized protein (155 aa).

A compositionally biased stretch (polar residues) spans 1–14 (MLTLSGWITTQVPP). A disordered region spans residues 1–44 (MLTLSGWITTQVPPSSRAAADAKAARTGTAEQAEDPAAGTDAAD). A compositionally biased stretch (low complexity) spans 17 to 30 (RAAADAKAARTGTA).

This is an uncharacterized protein from Pseudomonas aeruginosa (strain ATCC 15692 / DSM 22644 / CIP 104116 / JCM 14847 / LMG 12228 / 1C / PRS 101 / PAO1).